The sequence spans 782 residues: Phosphoribosylformylglycinamidine synthase subunit PurL (782 aa).

Histidine 48 is an active-site residue. ATP contacts are provided by tyrosine 51 and lysine 90. A Mg(2+)-binding site is contributed by glutamate 92. Substrate-binding positions include 93–96 and arginine 115; that span reads SHNH. The active-site Proton acceptor is histidine 94. Residue aspartate 116 coordinates Mg(2+). Glutamine 239 contacts substrate. Aspartate 267 provides a ligand contact to Mg(2+). A substrate-binding site is contributed by 311–313; that stretch reads ESQ. The ATP site is built by aspartate 525 and glycine 562. Asparagine 563 is a binding site for Mg(2+). Residue serine 565 coordinates substrate.

This sequence belongs to the FGAMS family. As to quaternary structure, monomer. Part of the FGAM synthase complex composed of 1 PurL, 1 PurQ and 2 PurS subunits.

It localises to the cytoplasm. It catalyses the reaction N(2)-formyl-N(1)-(5-phospho-beta-D-ribosyl)glycinamide + L-glutamine + ATP + H2O = 2-formamido-N(1)-(5-O-phospho-beta-D-ribosyl)acetamidine + L-glutamate + ADP + phosphate + H(+). It functions in the pathway purine metabolism; IMP biosynthesis via de novo pathway; 5-amino-1-(5-phospho-D-ribosyl)imidazole from N(2)-formyl-N(1)-(5-phospho-D-ribosyl)glycinamide: step 1/2. Its function is as follows. Part of the phosphoribosylformylglycinamidine synthase complex involved in the purines biosynthetic pathway. Catalyzes the ATP-dependent conversion of formylglycinamide ribonucleotide (FGAR) and glutamine to yield formylglycinamidine ribonucleotide (FGAM) and glutamate. The FGAM synthase complex is composed of three subunits. PurQ produces an ammonia molecule by converting glutamine to glutamate. PurL transfers the ammonia molecule to FGAR to form FGAM in an ATP-dependent manner. PurS interacts with PurQ and PurL and is thought to assist in the transfer of the ammonia molecule from PurQ to PurL. The sequence is that of Phosphoribosylformylglycinamidine synthase subunit PurL from Nostoc sp. (strain PCC 7120 / SAG 25.82 / UTEX 2576).